The primary structure comprises 327 residues: Malate dehydrogenase (327 aa).

An NAD(+)-binding site is contributed by 11–17 (GAAGQIS). Arg92 and Arg98 together coordinate substrate. Residues Asn105, Gln112, and 129-131 (VGN) contribute to the NAD(+) site. The substrate site is built by Asn131 and Arg162. Catalysis depends on His187, which acts as the Proton acceptor.

This sequence belongs to the LDH/MDH superfamily. MDH type 2 family.

The enzyme catalyses (S)-malate + NAD(+) = oxaloacetate + NADH + H(+). Its function is as follows. Catalyzes the reversible oxidation of malate to oxaloacetate. In Saccharophagus degradans (strain 2-40 / ATCC 43961 / DSM 17024), this protein is Malate dehydrogenase.